A 1392-amino-acid chain; its full sequence is ATP-dependent helicase/nuclease subunit A (1392 aa).

A UvrD-like helicase ATP-binding domain is found at 3–489 (NPKWTPAQQA…IDLNQNFRSR (487 aa)). 24 to 31 (AAAGSGKT) lines the ATP pocket. Disordered stretches follow at residues 291-319 (RGSK…KARD), 556-594 (RGAE…LEEA), and 1051-1126 (GPVQ…LDTK). 2 stretches are compositionally biased toward basic and acidic residues: residues 305–319 (ENSK…KARD) and 569–583 (AKGE…REPE). The region spanning 556-886 (RGAEDAATGA…RFITVHSSKG (331 aa)) is the UvrD-like helicase C-terminal domain. Acidic residues predominate over residues 584–594 (SGDDESSLEEA). The segment covering 1088-1113 (ASGKTEIPGETKNSEETKTSEDKKNL) has biased composition (basic and acidic residues).

This sequence belongs to the helicase family. AddA subfamily. As to quaternary structure, heterodimer of AddA and AddB/RexB. Mg(2+) is required as a cofactor.

It catalyses the reaction Couples ATP hydrolysis with the unwinding of duplex DNA by translocating in the 3'-5' direction.. The enzyme catalyses ATP + H2O = ADP + phosphate + H(+). Functionally, the heterodimer acts as both an ATP-dependent DNA helicase and an ATP-dependent, dual-direction single-stranded exonuclease. Recognizes the chi site generating a DNA molecule suitable for the initiation of homologous recombination. The AddA nuclease domain is required for chi fragment generation; this subunit has the helicase and 3' -&gt; 5' nuclease activities. The sequence is that of ATP-dependent helicase/nuclease subunit A from Desulfitobacterium hafniense (strain Y51).